Here is a 781-residue protein sequence, read N- to C-terminus: Probable beta-D-xylosidase 5 (781 aa).

The signal sequence occupies residues 1 to 23 (MSIRRFVRLSLLIIALVSSLCES). Residues asparagine 43, asparagine 103, and asparagine 123 are each glycosylated (N-linked (GlcNAc...) asparagine). Aspartate 291 is an active-site residue. Residues asparagine 342, asparagine 424, asparagine 504, asparagine 543, asparagine 601, and asparagine 653 are each glycosylated (N-linked (GlcNAc...) asparagine).

The protein belongs to the glycosyl hydrolase 3 family.

It localises to the secreted. Its subcellular location is the extracellular space. The protein resides in the extracellular matrix. This chain is Probable beta-D-xylosidase 5 (BXL5), found in Arabidopsis thaliana (Mouse-ear cress).